Here is a 194-residue protein sequence, read N- to C-terminus: Flagellar transcriptional regulator FlhC (194 aa).

Positions 139, 142, 159, and 162 each coordinate Zn(2+).

This sequence belongs to the FlhC family. As to quaternary structure, heterohexamer composed of two FlhC and four FlhD subunits. Each FlhC binds a FlhD dimer, forming a heterotrimer, and a hexamer assembles by dimerization of two heterotrimers. Zn(2+) is required as a cofactor.

The protein localises to the cytoplasm. Its function is as follows. Functions in complex with FlhD as a master transcriptional regulator that regulates transcription of several flagellar and non-flagellar operons by binding to their promoter region. Activates expression of class 2 flagellar genes, including fliA, which is a flagellum-specific sigma factor that turns on the class 3 genes. Also regulates genes whose products function in a variety of physiological pathways. In Serratia marcescens, this protein is Flagellar transcriptional regulator FlhC.